A 203-amino-acid chain; its full sequence is Ribosomal RNA small subunit methyltransferase G (203 aa).

S-adenosyl-L-methionine is bound by residues Gly-73, Leu-78, 124–125, and Arg-139; that span reads VE.

This sequence belongs to the methyltransferase superfamily. RNA methyltransferase RsmG family.

The protein localises to the cytoplasm. The catalysed reaction is guanosine(527) in 16S rRNA + S-adenosyl-L-methionine = N(7)-methylguanosine(527) in 16S rRNA + S-adenosyl-L-homocysteine. Its function is as follows. Specifically methylates the N7 position of guanine in position 527 of 16S rRNA. This Haemophilus influenzae (strain PittEE) protein is Ribosomal RNA small subunit methyltransferase G.